A 303-amino-acid chain; its full sequence is Cell division protein ZipA (303 aa).

Topologically, residues 1–6 (MMQDLR) are periplasmic. A helical transmembrane segment spans residues 7-27 (LILIIVGAIAIIALLLHGLWT). Over 28–303 (SRKERSSLFR…RIRSTLGVQV (276 aa)) the chain is Cytoplasmic. 3 disordered regions span residues 39–61 (RPVK…DEAF), 66–85 (KPYA…EPAI), and 124–159 (EQEP…GEKE). 2 stretches are compositionally biased toward basic and acidic residues: residues 75 to 85 (SHQEYKAEPAI) and 139 to 159 (ESER…GEKE).

This sequence belongs to the ZipA family. Interacts with FtsZ via their C-terminal domains.

The protein resides in the cell inner membrane. Functionally, essential cell division protein that stabilizes the FtsZ protofilaments by cross-linking them and that serves as a cytoplasmic membrane anchor for the Z ring. Also required for the recruitment to the septal ring of downstream cell division proteins. The sequence is that of Cell division protein ZipA from Photorhabdus laumondii subsp. laumondii (strain DSM 15139 / CIP 105565 / TT01) (Photorhabdus luminescens subsp. laumondii).